Consider the following 303-residue polypeptide: N-acetyl-D-glucosamine kinase (303 aa).

ATP-binding positions include 4–11 and 133–140; these read GFDIGGTK and GVGGGLIF. Zn(2+)-binding residues include His157, Cys177, Cys179, and Cys184.

This sequence belongs to the ROK (NagC/XylR) family. NagK subfamily.

The enzyme catalyses N-acetyl-D-glucosamine + ATP = N-acetyl-D-glucosamine 6-phosphate + ADP + H(+). The protein operates within cell wall biogenesis; peptidoglycan recycling. Functionally, catalyzes the phosphorylation of N-acetyl-D-glucosamine (GlcNAc) derived from cell-wall degradation, yielding GlcNAc-6-P. This chain is N-acetyl-D-glucosamine kinase, found in Escherichia coli O6:H1 (strain CFT073 / ATCC 700928 / UPEC).